We begin with the raw amino-acid sequence, 336 residues long: F420-dependent glucose-6-phosphate dehydrogenase (336 aa).

Position 37 (D37) interacts with coenzyme F420-(gamma-Glu)n. H38 serves as the catalytic Proton donor. Coenzyme F420-(gamma-Glu)n contacts are provided by residues T74 and 105 to 106 (SG). E107 serves as the catalytic Proton acceptor. Coenzyme F420-(gamma-Glu)n-binding positions include N110, 173 to 174 (SG), and 176 to 177 (SA). T191, K194, K255, and R279 together coordinate substrate.

The protein belongs to the F420-dependent glucose-6-phosphate dehydrogenase family. Homodimer.

The enzyme catalyses oxidized coenzyme F420-(gamma-L-Glu)(n) + D-glucose 6-phosphate + H(+) = 6-phospho-D-glucono-1,5-lactone + reduced coenzyme F420-(gamma-L-Glu)(n). Functionally, catalyzes the coenzyme F420-dependent oxidation of glucose 6-phosphate (G6P) to 6-phosphogluconolactone. The protein is F420-dependent glucose-6-phosphate dehydrogenase of Beutenbergia cavernae (strain ATCC BAA-8 / DSM 12333 / CCUG 43141 / JCM 11478 / NBRC 16432 / NCIMB 13614 / HKI 0122).